The following is a 90-amino-acid chain: MGKRLYAVAYDIPDDTRRVKLANLLKSYGERVQLSVFECYLDERLLEDLRRRARRLLDLGQDALRIYPVAGQVEVLGVGPLPELREVQVL.

Asp11 contacts Mg(2+).

This sequence belongs to the CRISPR-associated endoribonuclease Cas2 protein family. Homodimer, forms a heterotetramer with a Cas1 homodimer. Mn(2+) serves as cofactor. Mg(2+) is required as a cofactor.

Its activity is regulated as follows. Inhibited by EDTA and at pH 6.0. CRISPR (clustered regularly interspaced short palindromic repeat), is an adaptive immune system that provides protection against mobile genetic elements (viruses, transposable elements and conjugative plasmids). CRISPR clusters contain sequences complementary to antecedent mobile elements and target invading nucleic acids. CRISPR clusters are transcribed and processed into CRISPR RNA (crRNA). Involved in the integration of spacer DNA into the CRISPR cassette. Functions as a dsDNA endonuclease and as a weak ssRNase. The sequence is that of CRISPR-associated endonuclease Cas2 2 (cas2b) from Thermus thermophilus (strain ATCC BAA-163 / DSM 7039 / HB27).